Consider the following 176-residue polypeptide: Inorganic pyrophosphatase (176 aa).

Substrate is bound by residues lysine 30, arginine 44, and tyrosine 56. Residues aspartate 66, aspartate 71, and aspartate 103 each contribute to the Mg(2+) site. Tyrosine 142 is a substrate binding site.

Belongs to the PPase family. In terms of assembly, homohexamer. Mg(2+) serves as cofactor.

It localises to the cytoplasm. It catalyses the reaction diphosphate + H2O = 2 phosphate + H(+). Catalyzes the hydrolysis of inorganic pyrophosphate (PPi) forming two phosphate ions. The chain is Inorganic pyrophosphatase from Brucella melitensis biotype 1 (strain ATCC 23456 / CCUG 17765 / NCTC 10094 / 16M).